The sequence spans 438 residues: Phosphatidylserine decarboxylase proenzyme 1, mitochondrial (438 aa).

The transit peptide at 1–21 directs the protein to the mitochondrion; sequence MRRFRVWPPSPSPWPLLASRP. Residues 22 to 48 lie on the Mitochondrial matrix side of the membrane; the sequence is CPHSHHHRSPFHASANSGARQGNFILP. The helical transmembrane segment at 49-67 threads the bilayer; the sequence is GATAATLVMFGILHARRMY. The Mitochondrial intermembrane portion of the chain corresponds to 68–438; that stretch reads EDQKVVERKE…EAIGRWTSRE (371 aa). Residues D173, H273, and S387 each act as charge relay system; for autoendoproteolytic cleavage activity in the active site. Residue S387 is the Schiff-base intermediate with substrate; via pyruvic acid; for decarboxylase activity of the active site. A Pyruvic acid (Ser); by autocatalysis modification is found at S387.

It belongs to the phosphatidylserine decarboxylase family. PSD-B subfamily. Eukaryotic type I sub-subfamily. In terms of assembly, heterodimer of a large membrane-associated beta subunit and a small pyruvoyl-containing alpha subunit. Pyruvate is required as a cofactor. Post-translationally, is synthesized initially as an inactive proenzyme. Formation of the active enzyme involves a self-maturation process in which the active site pyruvoyl group is generated from an internal serine residue via an autocatalytic post-translational modification. Two non-identical subunits are generated from the proenzyme in this reaction, and the pyruvate is formed at the N-terminus of the alpha chain, which is derived from the carboxyl end of the proenzyme. The autoendoproteolytic cleavage occurs by a canonical serine protease mechanism, in which the side chain hydroxyl group of the serine supplies its oxygen atom to form the C-terminus of the beta chain, while the remainder of the serine residue undergoes an oxidative deamination to produce ammonia and the pyruvoyl prosthetic group on the alpha chain. During this reaction, the Ser that is part of the protease active site of the proenzyme becomes the pyruvoyl prosthetic group, which constitutes an essential element of the active site of the mature decarboxylase.

Its subcellular location is the mitochondrion inner membrane. The catalysed reaction is a 1,2-diacyl-sn-glycero-3-phospho-L-serine + H(+) = a 1,2-diacyl-sn-glycero-3-phosphoethanolamine + CO2. The protein operates within phospholipid metabolism; phosphatidylethanolamine biosynthesis; phosphatidylethanolamine from CDP-diacylglycerol: step 2/2. Functionally, catalyzes the formation of phosphatidylethanolamine (PtdEtn) from phosphatidylserine (PtdSer). Plays a central role in phospholipid metabolism and in the interorganelle trafficking of phosphatidylserine. The chain is Phosphatidylserine decarboxylase proenzyme 1, mitochondrial (PSD1) from Oryza sativa subsp. japonica (Rice).